The primary structure comprises 518 residues: Histone deacetylase 1 (518 aa).

The interval 22 to 333 (RRVCYFYDAE…WCYETGVALG (312 aa)) is histone deacetylase. His153 serves as the catalytic Proton donor/acceptor. 3 residues coordinate Zn(2+): Asp188, His190, and Asp276. Residues 387–518 (HAPSVQFQER…QDQPSVHQKT (132 aa)) form a disordered region. The span at 401–412 (ELPEQDEDQEDP) shows a compositional bias: acidic residues. The segment covering 413–435 (DERHHADSDVEMDDVKPLDDSGR) has biased composition (basic and acidic residues). Positions 503 to 518 (DNSNKLQDQPSVHQKT) are enriched in polar residues.

This sequence belongs to the histone deacetylase family. HD Type 1 subfamily. In terms of assembly, interacts with TPR3. The cofactor is Zn(2+). Expressed in roots and leaves.

It localises to the nucleus. The catalysed reaction is N(6)-acetyl-L-lysyl-[histone] + H2O = L-lysyl-[histone] + acetate. Its function is as follows. Responsible for the deacetylation of lysine residues on the N-terminal part of the core histones (H2A, H2B, H3 and H4). Histone deacetylation gives a tag for epigenetic repression and plays an important role in transcriptional regulation, cell cycle progression and developmental events. Histone deacetylases act via the formation of large multiprotein complexes. Negatively regulates the expression of the NAC48/NAC6 gene that controls root growth in seedlings. Epigenetically represses the expression of NAC48/NAC6 by deacetylating 'Lys-9' (H3K9ac), 'Lys-14' (H3K14ac) and 'Lys-18' (H3K18ac) of histone H3, and 'Lys-5' (H4K5ac), 'Lys-12' (H4K12ac) and 'Lys-16' (H4K16ac) of histone H4. Functions in the regulation of gene expression in the whole genome. Acts as a chromatin remodeling regulator to promote the formation of a repressive chromatin state. Functions with MODD via its interaction with TPR3, to down-regulates the histone acetylation level at BZIP46 target genes. BZIP46 is a positive regulator of abscisic acid (ABA) signaling and drought stress tolerance. This chain is Histone deacetylase 1, found in Oryza sativa subsp. japonica (Rice).